A 695-amino-acid chain; its full sequence is Potassium voltage-gated channel subfamily KQT member 4 (695 aa).

The segment at 1–21 (MAEAPPRRLGLGPPPGDAPRA) is disordered. Topologically, residues 1 to 96 (MAEAPPRRLG…VYNVLERPRG (96 aa)) are cytoplasmic. An a 1,2-diacyl-sn-glycero-3-phospho-(1D-myo-inositol-4,5-bisphosphate)-binding site is contributed by Arg93. A helical transmembrane segment spans residues 97 to 118 (WAFVYHVFIFLLVFSCLVLSVL). The Extracellular segment spans residues 119-129 (STIQEHQELAN). The chain crosses the membrane as a helical span at residues 130–152 (ECLLILEFVMIVVFGLEYIIRVW). Topologically, residues 153-168 (SAGCCCRYRGWQGRFR) are cytoplasmic. The helical transmembrane segment at 169–191 (FARKPFCVIDFIVFVASVAVIAA) threads the bilayer. Lys172 lines the a 1,2-diacyl-sn-glycero-3-phospho-(1D-myo-inositol-4,5-bisphosphate) pocket. The Extracellular portion of the chain corresponds to 192–202 (GTQGNIFATSA). The helical; Voltage-sensor transmembrane segment at 203–223 (LRSMRFLQILRMVRMDRRGGT) threads the bilayer. A 1,2-diacyl-sn-glycero-3-phospho-(1D-myo-inositol-4,5-bisphosphate) contacts are provided by Arg219, Arg220, Lys225, and Ser235. The Cytoplasmic portion of the chain corresponds to 224–235 (WKLLGSVVYAHS). Residues 236–258 (KELITAWYIGFLVLIFASFLVYL) form a helical membrane-spanning segment. Residues 259 to 270 (AEKDANSDFSSY) are Extracellular-facing. Positions 271–292 (ADSLWWGTITLTTIGYGDKTPH) form an intramembrane region, pore-forming. A topological domain (extracellular) is located at residue Thr293. Residues 294–322 (WLGRVLAAGFALLGISFFALPAGILGSGF) form a helical membrane-spanning segment. Residues 323 to 695 (ALKVQEQHRQ…ISRSVSTNMD (373 aa)) are Cytoplasmic-facing. A 1,2-diacyl-sn-glycero-3-phospho-(1D-myo-inositol-4,5-bisphosphate) is bound by residues His330 and Lys333. The interval 342–351 (AANLIQAAWR) is interaction with CALM. Residues 441–483 (RMSSSQKRTGPSKQHLAPPPIPTSPSSEQVGEASSPSKVQKSW) form a disordered region. 2 stretches are compositionally biased toward polar residues: residues 442–452 (MSSSQKRTGPS) and 464–483 (SPSSEQVGEASSPSKVQKSW). Residues 535–549 (RSVRILKFLVAKRKF) form an interaction with CALM region. The tract at residues 546 to 650 (KRKFKETLRP…SRCLRSGTSA (105 aa)) is C-terminal assembly domain (tetramerization). The tract at residues 588-608 (GRGPGDRKTREKGDKGPSDTE) is disordered. Basic and acidic residues predominate over residues 591–605 (PGDRKTREKGDKGPS).

Belongs to the potassium channel family. KQT (TC 1.A.1.15) subfamily. Kv7.4/KCNQ4 sub-subfamily. In terms of assembly, homotetramer. Interacts (via C-terminus) with calmodulin; forms a heterooctameric structure (with 4:4 KCNQ1:CALM stoichiometry); the interaction is calcium-independent, constitutive, participates in the proper assembly of a functional channel. The interaction with calcium-free CALM controls channel trafficking whereas interaction with calcium-bound CALM regulates channel gating. May form a functional heteromultimeric channel with KCNQ3. Interacts with HSP90AB1; promotes cell surface expression of KCNQ4. Expressed in both the inner (IHCs) and the outer hair cells (OHCs) of the cochlea. Reciprocal longitudinal gradients of expression is present in IHCs and OHCs. The strongest expression in IHCs is in the base of the cochlea and in the apex for OHCs. A basal to apical gradient of expression is also present in both type I and type II spiral ganglion cells.

Its subcellular location is the basal cell membrane. The enzyme catalyses K(+)(in) = K(+)(out). Its activity is regulated as follows. Two molecules of phosphatidylinositol-4,5-bisphosphate (PIP2-I and PIP2-II) are essential to activate KCNQ4 channel by inducing the coupling of the voltage-sensing domain (VSD) and the pore-forming domain (PD). Upon channel activation, PIP2-I and PIP2-II disrupt the VSD-calmodulin/CALM interaction, causing the release of CALM from the VSD which triggers the opening of the gate. Calcium suppresses KCNQ4 channel current through calcium-bound CALM C-terminus. Therefore CALM acts as calcium sensor that controls channel activity. Its function is as follows. Pore-forming subunit of the voltage-gated potassium (Kv) channel involved in the regulation of sensory cells excitability in the cochlea. KCNQ4/Kv7.4 channel is composed of 4 pore-forming subunits assembled as tetramers. Promotes the outflow of potassium ions in the repolarization phase of action potential which plays a role in regulating membrane potential of excitable cells. The channel conducts a slowly activating and deactivating current. Current often shows some inward rectification at positive potentials. Channel may be selectively permeable in vitro to other cations besides potassium, in decreasing order of affinity K(+) = Rb(+) &gt; Cs(+) &gt; Na(+). Important for normal physiological function of inner ear such as sensory perception of sound. This Rattus norvegicus (Rat) protein is Potassium voltage-gated channel subfamily KQT member 4.